Consider the following 397-residue polypeptide: Phosphoglycerate kinase (397 aa).

Substrate contacts are provided by residues 23 to 25, arginine 38, 61 to 64, arginine 119, and arginine 152; these read DLN and HLGR. Residues lysine 202, glutamate 324, and 354-357 contribute to the ATP site; that span reads GGDT.

Belongs to the phosphoglycerate kinase family. Monomer.

The protein resides in the cytoplasm. The enzyme catalyses (2R)-3-phosphoglycerate + ATP = (2R)-3-phospho-glyceroyl phosphate + ADP. It participates in carbohydrate degradation; glycolysis; pyruvate from D-glyceraldehyde 3-phosphate: step 2/5. This chain is Phosphoglycerate kinase (pgk), found in Xanthobacter flavus.